The chain runs to 202 residues: MSSHNLVTLVSWLAGDFSNREQAWDAPAFFSHIRLCMRPLPWQVFEGYGLYSEQADDYDWAHPYRIVVLNLVEQPDGIIECRNYALKDTAPYLGAAREAERARLHRLTPEQLEPLPGCTFLFKREGSLFRGRVRPGKGCRVFRKGRDTYLDGEATVSADYYKSIDRGRDLESDEQVWGSVSGPFHFTKQVDFAPEVLALARP.

This sequence belongs to the CpcT/CpeT biliprotein lyase family.

Functionally, covalently attaches a chromophore to Cys residue(s) of phycobiliproteins. This chain is Chromophore lyase CpcT/CpeT 2, found in Gloeobacter violaceus (strain ATCC 29082 / PCC 7421).